The chain runs to 333 residues: Cytosolic Fe-S cluster assembly factor NBP35 (333 aa).

Residues cysteine 32, cysteine 46, cysteine 49, and cysteine 55 each coordinate [4Fe-4S] cluster. Position 85–92 (85–92) interacts with ATP; the sequence is GKGGVGKS. Cysteine 258 and cysteine 261 together coordinate [4Fe-4S] cluster.

This sequence belongs to the Mrp/NBP35 ATP-binding proteins family. NUBP1/NBP35 subfamily. As to quaternary structure, heterotetramer of 2 NBP35 and 2 CFD1 chains. The cofactor is [4Fe-4S] cluster.

The protein resides in the cytoplasm. It is found in the nucleus. Component of the cytosolic iron-sulfur (Fe/S) protein assembly (CIA) machinery. Required for maturation of extramitochondrial Fe-S proteins. The NBP35-CFD1 heterotetramer forms a Fe-S scaffold complex, mediating the de novo assembly of an Fe-S cluster and its transfer to target apoproteins. Required for biogenesis and export of both ribosomal subunits, which may reflect a role in assembly of the Fe/S clusters in RLI1, a protein which performs rRNA processing and ribosome export. This chain is Cytosolic Fe-S cluster assembly factor NBP35, found in Eremothecium gossypii (strain ATCC 10895 / CBS 109.51 / FGSC 9923 / NRRL Y-1056) (Yeast).